Consider the following 253-residue polypeptide: Dof zinc finger protein DOF3.4 (253 aa).

A Dof-type zinc finger spans residues 30–84 (LPCPRCDSSNTKFCYYNNYNFSQPRHFCKACRRYWTHGGTLRDVPVGGGTRKSAK). 4 residues coordinate Zn(2+): cysteine 32, cysteine 35, cysteine 57, and cysteine 60. Residues 73–103 (VPVGGGTRKSAKRSRTCSNSSSSSVSGVVSN) are disordered. Low complexity predominate over residues 90–103 (SNSSSSSVSGVVSN).

Interacts with OBF4 or OBF5. Constitutively expressed in the whole plant.

The protein localises to the nucleus. Its function is as follows. Transcription factor that binds specifically to a 5'-AA[AG]G-3' consensus core sequence. Enhances the DNA binding of OBF transcription factors to OCS elements. This chain is Dof zinc finger protein DOF3.4 (DOF3.4), found in Arabidopsis thaliana (Mouse-ear cress).